Consider the following 120-residue polypeptide: Chaperonin GroEL (120 aa).

An ATP-binding site is contributed by 23 to 27 (DGTTT).

It belongs to the chaperonin (HSP60) family. As to quaternary structure, forms a cylinder of 14 subunits composed of two heptameric rings stacked back-to-back. Interacts with the co-chaperonin GroES.

Its subcellular location is the cytoplasm. It catalyses the reaction ATP + H2O + a folded polypeptide = ADP + phosphate + an unfolded polypeptide.. Functionally, together with its co-chaperonin GroES, plays an essential role in assisting protein folding. The GroEL-GroES system forms a nano-cage that allows encapsulation of the non-native substrate proteins and provides a physical environment optimized to promote and accelerate protein folding. This is Chaperonin GroEL from Mycobacterium kansasii.